Reading from the N-terminus, the 311-residue chain is L-lactate dehydrogenase 2 (311 aa).

NAD(+)-binding residues include valine 14, aspartate 35, and arginine 40. Arginine 90 lines the substrate pocket. Residues serine 103, 120–122 (ATN), and threonine 145 each bind NAD(+). 122–125 (NPCD) lines the substrate pocket. 150 to 153 (DTTR) is a substrate binding site. Histidine 177 serves as the catalytic Proton acceptor. Threonine 230 lines the substrate pocket.

This sequence belongs to the LDH/MDH superfamily. LDH family. As to quaternary structure, homotetramer.

It is found in the cytoplasm. The enzyme catalyses (S)-lactate + NAD(+) = pyruvate + NADH + H(+). Its pathway is fermentation; pyruvate fermentation to lactate; (S)-lactate from pyruvate: step 1/1. Functionally, catalyzes the conversion of lactate to pyruvate. This is L-lactate dehydrogenase 2 from Listeria monocytogenes serotype 4b (strain F2365).